We begin with the raw amino-acid sequence, 615 residues long: 1-deoxy-D-xylulose-5-phosphate synthase (615 aa).

Thiamine diphosphate-binding positions include histidine 76 and 117 to 119 (GHS). Aspartate 148 provides a ligand contact to Mg(2+). Thiamine diphosphate contacts are provided by residues 149–150 (GA), asparagine 177, tyrosine 284, and glutamate 365. Asparagine 177 lines the Mg(2+) pocket.

It belongs to the transketolase family. DXPS subfamily. As to quaternary structure, homodimer. Requires Mg(2+) as cofactor. Thiamine diphosphate serves as cofactor.

The catalysed reaction is D-glyceraldehyde 3-phosphate + pyruvate + H(+) = 1-deoxy-D-xylulose 5-phosphate + CO2. It functions in the pathway metabolic intermediate biosynthesis; 1-deoxy-D-xylulose 5-phosphate biosynthesis; 1-deoxy-D-xylulose 5-phosphate from D-glyceraldehyde 3-phosphate and pyruvate: step 1/1. Its function is as follows. Catalyzes the acyloin condensation reaction between C atoms 2 and 3 of pyruvate and glyceraldehyde 3-phosphate to yield 1-deoxy-D-xylulose-5-phosphate (DXP). The sequence is that of 1-deoxy-D-xylulose-5-phosphate synthase from Francisella tularensis subsp. novicida (strain U112).